A 233-amino-acid polypeptide reads, in one-letter code: Large ribosomal subunit protein uL1 (233 aa).

The protein belongs to the universal ribosomal protein uL1 family. Part of the 50S ribosomal subunit.

In terms of biological role, binds directly to 23S rRNA. The L1 stalk is quite mobile in the ribosome, and is involved in E site tRNA release. Functionally, protein L1 is also a translational repressor protein, it controls the translation of the L11 operon by binding to its mRNA. The chain is Large ribosomal subunit protein uL1 from Geotalea daltonii (strain DSM 22248 / JCM 15807 / FRC-32) (Geobacter daltonii).